Reading from the N-terminus, the 311-residue chain is Transcription factor bHLH145 (311 aa).

The bHLH domain maps to 253 to 302; that stretch reads FLKRSKLSSNKIGEEKIFETVSLLRSVVPGEELVDPILVIDRAIDYLKSL.

Homodimer.

It is found in the nucleus. The chain is Transcription factor bHLH145 (BHLH145) from Arabidopsis thaliana (Mouse-ear cress).